Here is a 349-residue protein sequence, read N- to C-terminus: MTSSQPYTLTQLGWKPFFQQQLTLEDYENTQICRIVAHHRSGYQLCSEQGRFHLAIHHAQPKMTVGDWVLLDEQQQFKRLLERQSELSRKAAGSKIAEQLIATNVDTLFIVCSLNDDFNLSRIERYLSIAKEAHIEPVVVLTKADLSPQAEQNITQVQQLSATLWVEAVNALDPVSVAALQPWCAKGRTVAFIGSSGVGKSTLTNTLLGEETQQTGGIREDDSKGRHTTTARSVHMIPDGALIIDTPGMRELQLADCSEGVSETFAEIETLAQHCRFKDCQHQQEPGCAVQQAIDNGTLEARRLQNYFKLLREQAYNASTFAEQRNRIKQIGKMYRHVQSDKQKLKTTY.

The CP-type G domain maps to 97–252 (AEQLIATNVD…IIDTPGMREL (156 aa)). GTP-binding positions include 142-145 (TKAD) and 194-202 (GSSGVGKST). Zn(2+) is bound by residues C275, C280, H282, and C288.

Belongs to the TRAFAC class YlqF/YawG GTPase family. RsgA subfamily. Monomer. Associates with 30S ribosomal subunit, binds 16S rRNA. Zn(2+) serves as cofactor.

It is found in the cytoplasm. Functionally, one of several proteins that assist in the late maturation steps of the functional core of the 30S ribosomal subunit. Helps release RbfA from mature subunits. May play a role in the assembly of ribosomal proteins into the subunit. Circularly permuted GTPase that catalyzes slow GTP hydrolysis, GTPase activity is stimulated by the 30S ribosomal subunit. This Vibrio vulnificus (strain CMCP6) protein is Small ribosomal subunit biogenesis GTPase RsgA 2.